The following is a 259-amino-acid chain: MLIVISPAKTLDFQSPLATRRYTQPELLPQSAALIDLCRKLTPARISTLMGISDKLADLNAARFQAWQTPFTPDNARQAILAFKGDVYTGLAAETFSEAQFDFAQRHLRMLSGLYGVLRPLDLMQPYRLEMGIRLANPAGASLYHYWGTMLTDKLNQALAEQGDTLVINLASDEYFRAVQPARINGRVIKPVFLDEKNGQYKVISFNAKKARGMMSRCIITEALTQPEQLKAFDAGGYRFDAAASSDNEWVFKRLQQDG.

It belongs to the UPF0246 family.

This Sodalis glossinidius (strain morsitans) protein is UPF0246 protein SG0407.